The following is a 160-amino-acid chain: NADH-quinone oxidoreductase subunit B (160 aa).

Positions 37, 38, 102, and 132 each coordinate [4Fe-4S] cluster.

This sequence belongs to the complex I 20 kDa subunit family. In terms of assembly, NDH-1 is composed of 14 different subunits. Subunits NuoB, C, D, E, F, and G constitute the peripheral sector of the complex. [4Fe-4S] cluster is required as a cofactor.

The protein resides in the cell inner membrane. The catalysed reaction is a quinone + NADH + 5 H(+)(in) = a quinol + NAD(+) + 4 H(+)(out). NDH-1 shuttles electrons from NADH, via FMN and iron-sulfur (Fe-S) centers, to quinones in the respiratory chain. Couples the redox reaction to proton translocation (for every two electrons transferred, four hydrogen ions are translocated across the cytoplasmic membrane), and thus conserves the redox energy in a proton gradient. The protein is NADH-quinone oxidoreductase subunit B of Cupriavidus metallidurans (strain ATCC 43123 / DSM 2839 / NBRC 102507 / CH34) (Ralstonia metallidurans).